Reading from the N-terminus, the 1076-residue chain is Histone deacetylase 4 (1076 aa).

Positions 66–169 (REQQLQQELL…GKESAVASTE (104 aa)) form a coiled coil. Residues 117–312 (MLAMKHQQEL…NSSSGNVSTE (196 aa)) form an interaction with MEF2A region. A compositionally biased stretch (basic and acidic residues) spans 132–162 (KLERHRQEQELEKQHREQKLQQLKNKEKGKE). Disordered stretches follow at residues 132–166 (KLER…SAVA), 205–225 (TQHS…ASYN), and 239–323 (PLRK…PSAP). Positions 205 to 224 (TQHSSLDQSSPPQSGVSASY) are enriched in polar residues. A Phosphoserine modification is found at Ser-209. Ser-245 bears the Phosphoserine; by CaMK4 and SIK1 mark. Over residues 258–273 (KVAERRSSPLLRRKDG) the composition is skewed to basic and acidic residues. Residues 289-310 (SACSSAPGSGPSSPNSSSGNVS) show a composition bias toward low complexity. The PxLPxI/L motif; mediates interaction with ANKRA2 and 14-3-3 proteins motif lies at 348 to 353 (PSLPNI). Position 349 is a phosphoserine (Ser-349). Position 465 is a phosphoserine; by CaMK4 and SIK1 (Ser-465). Disordered regions lie at residues 506 to 529 (ISKP…ELRE), 541 to 580 (RLPG…QRPA), and 622 to 645 (RPLS…EPPT). Positions 514 to 529 (RQPESHPEETEEELRE) are enriched in basic and acidic residues. Lys-556 participates in a covalent cross-link: Glycyl lysine isopeptide (Lys-Gly) (interchain with G-Cter in SUMO). A Phosphoserine modification is found at Ser-562. Over residues 626–638 (RAQSSPASATFPM) the composition is skewed to polar residues. Position 629 is a phosphoserine; by CaMK4 (Ser-629). At Ser-630 the chain carries Phosphoserine. A histone deacetylase region spans residues 652–1076 (GLVYDTLMLK…EEPMEEEPPL (425 aa)). The Zn(2+) site is built by Cys-664, Cys-666, His-672, and Cys-743. His-795 is a catalytic residue. Positions 1043 to 1076 (EEAETVTAMASLSVGVKPAEKRSEEEPMEEEPPL) match the Nuclear export signal motif.

The protein belongs to the histone deacetylase family. HD type 2 subfamily. As to quaternary structure, homodimer. Homodimerization via its N-terminal domain. Interacts with HDAC7. Interacts with MEF2A, MEF2C, MEF2D, MORC2 and NR2C1. Interacts with a 14-3-3 chaperone proteins in a phosphorylation dependent manner. Interacts with 14-3-3 protein YWHAB. Interacts with BTBD14B. Interacts with KDM5B. Interacts (via PxLPxI/L motif) with ANKRA2 (via ankyrin repeats). Interacts with CUL7 (as part of the 3M complex); negatively regulated by ANKRA2. Interacts with EP300 in the presence of TFAP2C. Interacts with AHRR. Interacts with MYOCD. Interacts with HSPA1A and HSPA1B leading to their deacetylation at 'Lys-77'. Interacts with ZBTB7B; the interaction allows the recruitment of HDAC4 on CD8 loci for deacetylation and possible inhibition of CD8 genes expression. Interacts with DHX36. Interacts with SIK3; this interaction leads to HDAC4 retention in the cytoplasm. Interacts with ZNF638. In terms of processing, phosphorylated by CaMK4 at Ser-245, Ser-465 and Ser-629. Phosphorylation at other residues by CaMK2D is required for the interaction with 14-3-3. Phosphorylation at Ser-349, within the PxLPxI/L motif, impairs the binding of ANKRA2 but generates a high-affinity docking site for 14-3-3. Sumoylation on Lys-556 is promoted by the E3 SUMO-protein ligase RANBP2, and prevented by phosphorylation by CaMK4.

The protein localises to the nucleus. It localises to the cytoplasm. The enzyme catalyses N(6)-acetyl-L-lysyl-[histone] + H2O = L-lysyl-[histone] + acetate. In terms of biological role, responsible for the deacetylation of lysine residues on the N-terminal part of the core histones (H2A, H2B, H3 and H4). Histone deacetylation gives a tag for epigenetic repression and plays an important role in transcriptional regulation, cell cycle progression and developmental events. Histone deacetylases act via the formation of large multiprotein complexes. Involved in muscle maturation via its interaction with the myocyte enhancer factors such as MEF2A, MEF2C and MEF2D. Deacetylates HSPA1A and HSPA1A at 'Lys-77' leading to their preferential binding to co-chaperone STUB1. In Mus musculus (Mouse), this protein is Histone deacetylase 4 (Hdac4).